The following is a 488-amino-acid chain: Ribulose bisphosphate carboxylase large chain (488 aa).

The substrate site is built by Asn127 and Thr177. Lys179 functions as the Proton acceptor in the catalytic mechanism. Lys181 contacts substrate. Residues Lys205, Asp207, and Glu208 each contribute to the Mg(2+) site. The residue at position 205 (Lys205) is an N6-carboxylysine. His297 acts as the Proton acceptor in catalysis. Residues Arg298, His330, and Ser382 each coordinate substrate.

The protein belongs to the RuBisCO large chain family. Type I subfamily. As to quaternary structure, heterohexadecamer of 8 large chains and 8 small chains. Mg(2+) is required as a cofactor.

It localises to the plastid. The protein resides in the chloroplast. The enzyme catalyses 2 (2R)-3-phosphoglycerate + 2 H(+) = D-ribulose 1,5-bisphosphate + CO2 + H2O. It carries out the reaction D-ribulose 1,5-bisphosphate + O2 = 2-phosphoglycolate + (2R)-3-phosphoglycerate + 2 H(+). RuBisCO catalyzes two reactions: the carboxylation of D-ribulose 1,5-bisphosphate, the primary event in carbon dioxide fixation, as well as the oxidative fragmentation of the pentose substrate in the photorespiration process. Both reactions occur simultaneously and in competition at the same active site. The protein is Ribulose bisphosphate carboxylase large chain of Porphyra purpurea (Red seaweed).